Consider the following 339-residue polypeptide: Ketol-acid reductoisomerase (NADP(+)) (339 aa).

The KARI N-terminal Rossmann domain maps to 1–182; sequence MRVYYDRDAD…GGGRAGIIET (182 aa). NADP(+)-binding positions include 24-27, arginine 48, serine 51, serine 53, and 83-86; these read YGSQ and DELQ. The active site involves histidine 108. Glycine 134 contributes to the NADP(+) binding site. The KARI C-terminal knotted domain maps to 183-328; the sequence is TFKEECETDL…ARLRDMMPWI (146 aa). Aspartate 191, glutamate 195, glutamate 227, and glutamate 231 together coordinate Mg(2+). Serine 252 contacts substrate.

This sequence belongs to the ketol-acid reductoisomerase family. Mg(2+) serves as cofactor.

The enzyme catalyses (2R)-2,3-dihydroxy-3-methylbutanoate + NADP(+) = (2S)-2-acetolactate + NADPH + H(+). It carries out the reaction (2R,3R)-2,3-dihydroxy-3-methylpentanoate + NADP(+) = (S)-2-ethyl-2-hydroxy-3-oxobutanoate + NADPH + H(+). It functions in the pathway amino-acid biosynthesis; L-isoleucine biosynthesis; L-isoleucine from 2-oxobutanoate: step 2/4. Its pathway is amino-acid biosynthesis; L-valine biosynthesis; L-valine from pyruvate: step 2/4. In terms of biological role, involved in the biosynthesis of branched-chain amino acids (BCAA). Catalyzes an alkyl-migration followed by a ketol-acid reduction of (S)-2-acetolactate (S2AL) to yield (R)-2,3-dihydroxy-isovalerate. In the isomerase reaction, S2AL is rearranged via a Mg-dependent methyl migration to produce 3-hydroxy-3-methyl-2-ketobutyrate (HMKB). In the reductase reaction, this 2-ketoacid undergoes a metal-dependent reduction by NADPH to yield (R)-2,3-dihydroxy-isovalerate. The chain is Ketol-acid reductoisomerase (NADP(+)) from Bradyrhizobium sp. (strain ORS 278).